We begin with the raw amino-acid sequence, 320 residues long: Sensor histidine kinase YbdK (320 aa).

Residues 1-21 traverse the membrane as a helical segment; sequence MLLFTAVISVPMLLLAVSVLM. Residues 22 to 41 lie on the Extracellular side of the membrane; sequence SVIYDSMFKPMNHGMPFHRS. Residues 42–62 traverse the membrane as a helical segment; that stretch reads FAYPAMIVVFLISLLLLAFLF. Residues 63–320 are Cytoplasmic-facing; it reads SKSIHSLLHK…NGTGFLFSKE (258 aa). The 54-residue stretch at 67–120 folds into the HAMP domain; the sequence is HSLLHKINLLNQTIRHLASDQRVPDKIEVKRADEIGELIKSVNLLIERTTYREL. Positions 135 to 320 constitute a Histidine kinase domain; sequence KLRHDINTPL…NGTGFLFSKE (186 aa). The residue at position 138 (H138) is a Phosphohistidine; by autocatalysis.

The protein resides in the cell membrane. It catalyses the reaction ATP + protein L-histidine = ADP + protein N-phospho-L-histidine.. Member of the two-component regulatory system YbdK/YbdJ. Probably activates YbdJ by phosphorylation. In Bacillus subtilis (strain 168), this protein is Sensor histidine kinase YbdK (ybdK).